A 174-amino-acid polypeptide reads, in one-letter code: Large ribosomal subunit protein uL6 (174 aa).

This sequence belongs to the universal ribosomal protein uL6 family. Part of the 50S ribosomal subunit.

This protein binds to the 23S rRNA, and is important in its secondary structure. It is located near the subunit interface in the base of the L7/L12 stalk, and near the tRNA binding site of the peptidyltransferase center. This is Large ribosomal subunit protein uL6 from Stenotrophomonas maltophilia (strain R551-3).